We begin with the raw amino-acid sequence, 678 residues long: Glycine--tRNA ligase beta subunit (678 aa).

This sequence belongs to the class-II aminoacyl-tRNA synthetase family. As to quaternary structure, tetramer of two alpha and two beta subunits.

The protein localises to the cytoplasm. The catalysed reaction is tRNA(Gly) + glycine + ATP = glycyl-tRNA(Gly) + AMP + diphosphate. The polypeptide is Glycine--tRNA ligase beta subunit (Streptococcus pneumoniae (strain P1031)).